The chain runs to 293 residues: Neugrin (293 aa).

The signal sequence occupies residues 1 to 15 (MALSLSLFLGGRVRA). Disordered stretches follow at residues 25–48 (QGVAGPGSISREPDPDSDWEPEER) and 162–211 (PLSA…EKNK). Serine 41 bears the Phosphoserine mark. The N-linked (GlcNAc...) asparagine glycan is linked to asparagine 270.

The protein belongs to the neugrin family. As to quaternary structure, forms a regulatory protein-RNA complex, consisting of RCC1L, NGRN, RPUSD3, RPUSD4, TRUB2, FASTKD2 and 16S mt-rRNA. Interacts with 16S mt-rRNA; this interaction is direct.

The protein resides in the nucleus. Its subcellular location is the secreted. It localises to the mitochondrion membrane. Functionally, plays an essential role in mitochondrial ribosome biogenesis. As a component of a functional protein-RNA module, consisting of RCC1L, NGRN, RPUSD3, RPUSD4, TRUB2, FASTKD2 and 16S mitochondrial ribosomal RNA (16S mt-rRNA), controls 16S mt-rRNA abundance and is required for intra-mitochondrial translation of core subunits of the oxidative phosphorylation system. In Rattus norvegicus (Rat), this protein is Neugrin (Ngrn).